The chain runs to 87 residues: Pro-gurmarin (87 aa).

Residues 1 to 20 form the signal peptide; the sequence is MAKFAAIVLLILVASATVNA. Positions 21–52 are excised as a propeptide; that stretch reads VKEHDELPTTGMSRKILLQPVFKSLIISIAEG. Q53 carries the post-translational modification Pyrrolidone carboxylic acid. Disulfide bonds link C55/C70, C62/C75, and C69/C85.

As to expression, expressed in leaves (at protein level).

Peptide that strongly, but reversibly, suppresses the sweet taste-response to various sweeteners, including sugars, sweet amino acids and the artificial sweetener saccharin. In rodents, potentially binds to a sweet taste receptor present on apical microvilli of a subset of taste bud cells. Highly effective at blocking the sweet taste-response in rodents such as rats and mice, though mice may possess a mix of gurmarin-sensitive and -insensitive receptors. Has almost no effect on the sweet taste-response in humans. Inhibits Staphylococcus aureus biofilm formation without affecting bacterial viability. May be one of at least 9 different disulfide-rich peptides produced with varying properties. The polypeptide is Pro-gurmarin (Gymnema sylvestre (Gurmar)).